The primary structure comprises 311 residues: Malate dehydrogenase (311 aa).

NAD(+)-binding positions include 7–13 (GAAGGIG) and D34. 2 residues coordinate substrate: R81 and R87. Residues N94 and 117-119 (ITN) contribute to the NAD(+) site. N119 and R153 together coordinate substrate. The active-site Proton acceptor is the H177. M227 lines the NAD(+) pocket.

It belongs to the LDH/MDH superfamily. MDH type 1 family. Homodimer.

It catalyses the reaction (S)-malate + NAD(+) = oxaloacetate + NADH + H(+). Functionally, catalyzes the reversible oxidation of malate to oxaloacetate. The protein is Malate dehydrogenase of Shewanella sp. (strain ANA-3).